The following is a 532-amino-acid chain: 2,3-bisphosphoglycerate-independent phosphoglycerate mutase (532 aa).

2 residues coordinate Mn(2+): Asp15 and Ser65. The active-site Phosphoserine intermediate is Ser65. Residues His126, 156–157 (RD), Arg188, Arg194, 258–261 (RPDR), and Lys331 each bind substrate. Residues Asp398, His402, Asp439, His440, and His457 each coordinate Mn(2+).

This sequence belongs to the BPG-independent phosphoglycerate mutase family. As to quaternary structure, monomer. The cofactor is Mn(2+).

It carries out the reaction (2R)-2-phosphoglycerate = (2R)-3-phosphoglycerate. Its pathway is carbohydrate degradation; glycolysis; pyruvate from D-glyceraldehyde 3-phosphate: step 3/5. In terms of biological role, catalyzes the interconversion of 2-phosphoglycerate and 3-phosphoglycerate. The sequence is that of 2,3-bisphosphoglycerate-independent phosphoglycerate mutase from Trichodesmium erythraeum (strain IMS101).